The sequence spans 288 residues: Homoserine kinase (288 aa).

79 to 89 (PLARGLGSSSS) provides a ligand contact to ATP.

It belongs to the GHMP kinase family. Homoserine kinase subfamily.

It localises to the cytoplasm. It catalyses the reaction L-homoserine + ATP = O-phospho-L-homoserine + ADP + H(+). Its pathway is amino-acid biosynthesis; L-threonine biosynthesis; L-threonine from L-aspartate: step 4/5. In terms of biological role, catalyzes the ATP-dependent phosphorylation of L-homoserine to L-homoserine phosphate. This Streptococcus sanguinis (strain SK36) protein is Homoserine kinase.